A 282-amino-acid polypeptide reads, in one-letter code: Pantothenate synthetase (282 aa).

30–37 (MGNLHDGH) contributes to the ATP binding site. Catalysis depends on His-37, which acts as the Proton donor. Gln-61 serves as a coordination point for (R)-pantoate. A beta-alanine-binding site is contributed by Gln-61. Position 149–152 (149–152 (GEKD)) interacts with ATP. A (R)-pantoate-binding site is contributed by Gln-155. 186–189 (MSSR) serves as a coordination point for ATP.

Belongs to the pantothenate synthetase family. Homodimer.

The protein resides in the cytoplasm. The enzyme catalyses (R)-pantoate + beta-alanine + ATP = (R)-pantothenate + AMP + diphosphate + H(+). Its pathway is cofactor biosynthesis; (R)-pantothenate biosynthesis; (R)-pantothenate from (R)-pantoate and beta-alanine: step 1/1. Catalyzes the condensation of pantoate with beta-alanine in an ATP-dependent reaction via a pantoyl-adenylate intermediate. The polypeptide is Pantothenate synthetase (Alteromonas mediterranea (strain DSM 17117 / CIP 110805 / LMG 28347 / Deep ecotype)).